The chain runs to 255 residues: Large ribosomal subunit protein uL4 (255 aa).

It belongs to the universal ribosomal protein uL4 family. In terms of assembly, part of the 50S ribosomal subunit.

In terms of biological role, one of the primary rRNA binding proteins, this protein initially binds near the 5'-end of the 23S rRNA. It is important during the early stages of 50S assembly. It makes multiple contacts with different domains of the 23S rRNA in the assembled 50S subunit and ribosome. Forms part of the polypeptide exit tunnel. The protein is Large ribosomal subunit protein uL4 of Pyrococcus horikoshii (strain ATCC 700860 / DSM 12428 / JCM 9974 / NBRC 100139 / OT-3).